A 408-amino-acid chain; its full sequence is MKKQILQLNLEQTSSAAAEDTNLDCSLAGYDYVLPPERIAQNPAVPRDSSRLLVVNSQTTGKETPPLHQIFRDLPDILRPGDLLIMNNTKVIPARLYGRKSSGAEVEILLLEERKFNCWLALVKPGKRFKKGTQIIFEGLGIRNLGIKNSPHYPLSPEGFPPSPVPNPHQLTATVLETDKATGGRLLQFDLPEGESLVQLLDKFGEIPLPPYITASQAADEQYQTVYAEQPGAIAAPTAGLHFTPELLEKLRDRNINQAFITLHVGVGTFRPVEVEDVATHQMHEEWIEIPAATVAQIKATKAAGGRIIAVGTTVVRALEGAAASGDLQEFCGKTNLFIYPGYKWQVVEGLITNFHLPRSSLLMLVSALIGRERLLNIYQEAIASQYRFYSFGDAMLILPEARGVNSH.

Belongs to the QueA family. In terms of assembly, monomer.

It localises to the cytoplasm. It carries out the reaction 7-aminomethyl-7-carbaguanosine(34) in tRNA + S-adenosyl-L-methionine = epoxyqueuosine(34) in tRNA + adenine + L-methionine + 2 H(+). It participates in tRNA modification; tRNA-queuosine biosynthesis. Transfers and isomerizes the ribose moiety from AdoMet to the 7-aminomethyl group of 7-deazaguanine (preQ1-tRNA) to give epoxyqueuosine (oQ-tRNA). The chain is S-adenosylmethionine:tRNA ribosyltransferase-isomerase from Trichormus variabilis (strain ATCC 29413 / PCC 7937) (Anabaena variabilis).